The primary structure comprises 141 residues: Nucleoside diphosphate kinase (141 aa).

Residues Lys11, Phe59, Arg87, Thr93, Arg104, and Asn114 each contribute to the ATP site. The active-site Pros-phosphohistidine intermediate is His117.

It belongs to the NDK family. Homotetramer. Mg(2+) serves as cofactor.

It is found in the cytoplasm. The enzyme catalyses a 2'-deoxyribonucleoside 5'-diphosphate + ATP = a 2'-deoxyribonucleoside 5'-triphosphate + ADP. It carries out the reaction a ribonucleoside 5'-diphosphate + ATP = a ribonucleoside 5'-triphosphate + ADP. In terms of biological role, major role in the synthesis of nucleoside triphosphates other than ATP. The ATP gamma phosphate is transferred to the NDP beta phosphate via a ping-pong mechanism, using a phosphorylated active-site intermediate. The chain is Nucleoside diphosphate kinase from Bdellovibrio bacteriovorus (strain ATCC 15356 / DSM 50701 / NCIMB 9529 / HD100).